Reading from the N-terminus, the 279-residue chain is Protein SCO2 homolog, mitochondrial (279 aa).

A helical transmembrane segment spans residues 73–90 (LVVTLLFGGGIIGTWWYV). At 91–279 (HQEKEKRIQM…MKTFVRLFPD (189 aa)) the chain is on the mitochondrial intermembrane side. The region spanning 97–271 (RIQMQRLEQL…IAESIRNHMK (175 aa)) is the Thioredoxin domain. Residues Cys145, Cys149, and His236 each coordinate Cu cation. Residues Cys145 and Cys149 are joined by a disulfide bond.

This sequence belongs to the SCO1/2 family. As to quaternary structure, homodimer.

The protein localises to the mitochondrion inner membrane. Its function is as follows. Copper metallochaperone essential for the synthesis and maturation of cytochrome c oxidase subunit II (MT-CO2/COX2) by facilitating the incorporation of copper into the Cu(A) site of MT-CO2/COX2. Could also act as a thiol-disulfide oxidoreductase to regulate the redox state of the cysteines in SCO1 during maturation of MT-CO2/COX2. The polypeptide is Protein SCO2 homolog, mitochondrial (sco2) (Danio rerio (Zebrafish)).